The sequence spans 181 residues: Diphosphoinositol polyphosphate phosphohydrolase NUDT4B (181 aa).

Substrate-binding positions include arginine 10, lysine 18–arginine 20, and serine 39–arginine 41. The Nudix hydrolase domain maps to lysine 18 to lysine 145. 2 residues coordinate Mg(2+): glycine 50 and glutamate 66. The Nudix box signature appears at glycine 51–glycine 72. Glutamate 69 acts as the Proton acceptor in catalysis. A Mg(2+)-binding site is contributed by glutamate 70. Residues arginine 90–histidine 92, arginine 116, and lysine 134 contribute to the substrate site.

This sequence belongs to the Nudix hydrolase family. DIPP subfamily. It depends on Mg(2+) as a cofactor. The cofactor is Mn(2+).

The protein localises to the cytoplasm. The catalysed reaction is diphospho-myo-inositol polyphosphate + H2O = myo-inositol polyphosphate + phosphate.. Its function is as follows. Cleaves a beta-phosphate from the diphosphate groups in PP-InsP5 (diphosphoinositol pentakisphosphate), PP-InsP4 and [PP]2-InsP4 (bisdiphosphoinositol tetrakisphosphate), suggesting that it may play a role in signal transduction. Also able to catalyze the hydrolysis of dinucleoside oligophosphate Ap6A, but not Ap5A. The major reaction products are ADP and p4a from Ap6A. Also able to hydrolyze 5-phosphoribose 1-diphosphate. Does not play a role in U8 snoRNA decapping activity. Binds U8 snoRNA. The sequence is that of Diphosphoinositol polyphosphate phosphohydrolase NUDT4B from Homo sapiens (Human).